Consider the following 370-residue polypeptide: Chaperone protein DnaJ (370 aa).

Positions 4 to 68 (DYYQVLGVSK…QKRAAYDRFG (65 aa)) constitute a J domain. The CR-type zinc finger occupies 133–211 (GIEKNISFSS…CHGMGRYHKQ (79 aa)). Zn(2+)-binding residues include cysteine 146, cysteine 149, cysteine 163, cysteine 166, cysteine 185, cysteine 188, cysteine 199, and cysteine 202. CXXCXGXG motif repeat units follow at residues 146–153 (CDTCHGTG), 163–170 (CDACGGVG), 185–192 (CHKCQGNG), and 199–206 (CKKCHGMG).

The protein belongs to the DnaJ family. Homodimer. Requires Zn(2+) as cofactor.

Its subcellular location is the cytoplasm. Participates actively in the response to hyperosmotic and heat shock by preventing the aggregation of stress-denatured proteins and by disaggregating proteins, also in an autonomous, DnaK-independent fashion. Unfolded proteins bind initially to DnaJ; upon interaction with the DnaJ-bound protein, DnaK hydrolyzes its bound ATP, resulting in the formation of a stable complex. GrpE releases ADP from DnaK; ATP binding to DnaK triggers the release of the substrate protein, thus completing the reaction cycle. Several rounds of ATP-dependent interactions between DnaJ, DnaK and GrpE are required for fully efficient folding. Also involved, together with DnaK and GrpE, in the DNA replication of plasmids through activation of initiation proteins. This chain is Chaperone protein DnaJ, found in Rickettsia prowazekii (strain Madrid E).